Consider the following 438-residue polypeptide: 23S rRNA (uracil(1939)-C(5))-methyltransferase RlmD (438 aa).

The TRAM domain occupies 4 to 68 (FYTPGRRTAT…RHFARGRVTR (65 aa)). Positions 81, 87, 90, and 167 each coordinate [4Fe-4S] cluster. Residues Q269, F298, N303, E319, N346, and D367 each contribute to the S-adenosyl-L-methionine site. Residue C393 is the Nucleophile of the active site.

Belongs to the class I-like SAM-binding methyltransferase superfamily. RNA M5U methyltransferase family. RlmD subfamily.

The enzyme catalyses uridine(1939) in 23S rRNA + S-adenosyl-L-methionine = 5-methyluridine(1939) in 23S rRNA + S-adenosyl-L-homocysteine + H(+). Catalyzes the formation of 5-methyl-uridine at position 1939 (m5U1939) in 23S rRNA. This is 23S rRNA (uracil(1939)-C(5))-methyltransferase RlmD from Edwardsiella ictaluri (strain 93-146).